Consider the following 422-residue polypeptide: Kynurenine--oxoglutarate transaminase 1 (422 aa).

Residues Gly-36 and Asn-185 each contribute to the substrate site. Lys-247 is subject to N6-(pyridoxal phosphate)lysine. Residue Arg-398 coordinates substrate.

It belongs to the class-I pyridoxal-phosphate-dependent aminotransferase family. In terms of assembly, homodimer. Pyridoxal 5'-phosphate serves as cofactor.

The protein localises to the cytoplasm. The protein resides in the cytosol. The catalysed reaction is L-kynurenine + 2-oxoglutarate = kynurenate + L-glutamate + H2O. The enzyme catalyses 3-phenylpyruvate + L-glutamine = 2-oxoglutaramate + L-phenylalanine. It catalyses the reaction an S-substituted L-cysteine + H2O = a thiol + pyruvate + NH4(+). It participates in amino-acid degradation; L-kynurenine degradation; kynurenate from L-kynurenine: step 1/2. Its activity is regulated as follows. Inhibited by tryptophan, indole-3-pyruvic acid, 3-indolepropionic acid, DL-indole-3-lactic acid, indole-3-acetic acid (IAC), amino-oxyacetate (AOAA), aminooxy-phenylpropionic acid (AOPP) and Tris. Catalyzes the irreversible transamination of the L-tryptophan metabolite L-kynurenine to form kynurenic acid (KA), an intermediate in the tryptophan catabolic pathway which is also a broad spectrum antagonist of the three ionotropic excitatory amino acid receptors among others. Also metabolizes the cysteine conjugates of certain halogenated alkenes and alkanes to form reactive metabolites. Catalyzes the beta-elimination of S-conjugates and Se-conjugates of L-(seleno)cysteine, resulting in the cleavage of the C-S or C-Se bond. This Homo sapiens (Human) protein is Kynurenine--oxoglutarate transaminase 1.